The following is a 350-amino-acid chain: Small ribosomal subunit biogenesis GTPase RsgA (350 aa).

The segment at methionine 1 to lysine 30 is disordered. A compositionally biased stretch (polar residues) spans threonine 7–lysine 20. A compositionally biased stretch (basic residues) spans threonine 21–lysine 30. Residues histidine 106 to phenylalanine 274 enclose the CP-type G domain. Residues asparagine 162–aspartate 165 and glycine 216–serine 224 contribute to the GTP site. Positions 298, 303, 305, and 311 each coordinate Zn(2+).

This sequence belongs to the TRAFAC class YlqF/YawG GTPase family. RsgA subfamily. As to quaternary structure, monomer. Associates with 30S ribosomal subunit, binds 16S rRNA. The cofactor is Zn(2+).

It is found in the cytoplasm. In terms of biological role, one of several proteins that assist in the late maturation steps of the functional core of the 30S ribosomal subunit. Helps release RbfA from mature subunits. May play a role in the assembly of ribosomal proteins into the subunit. Circularly permuted GTPase that catalyzes slow GTP hydrolysis, GTPase activity is stimulated by the 30S ribosomal subunit. In Histophilus somni (strain 2336) (Haemophilus somnus), this protein is Small ribosomal subunit biogenesis GTPase RsgA.